Consider the following 308-residue polypeptide: uncharacterized protein (308 aa).

Residues 1-19 form the signal peptide; sequence MKLLLILILIINNYNLCLS. 2 N-linked (GlcNAc...) asparagine glycosylation sites follow: Asn25 and Asn300.

It localises to the secreted. This is an uncharacterized protein from Dictyostelium discoideum (Social amoeba).